We begin with the raw amino-acid sequence, 217 residues long: Urease accessory protein UreF (217 aa).

It belongs to the UreF family. In terms of assembly, ureD, UreF and UreG form a complex that acts as a GTP-hydrolysis-dependent molecular chaperone, activating the urease apoprotein by helping to assemble the nickel containing metallocenter of UreC. The UreE protein probably delivers the nickel.

Its subcellular location is the cytoplasm. Its function is as follows. Required for maturation of urease via the functional incorporation of the urease nickel metallocenter. This is Urease accessory protein UreF from Ruegeria pomeroyi (strain ATCC 700808 / DSM 15171 / DSS-3) (Silicibacter pomeroyi).